A 279-amino-acid chain; its full sequence is MRNKAVLDLHLVSDSTCETVIAVARSAVEHFKSLEVNEFVWSLVGSKRQVDKVMLNINPERHNLIMYTVVDDDLRKYLKEKATAQSVRCIPVLAHVIREISCYLQVTKDPNAHPHKLGDEYFNRIDAINYTISHDDGQNLWDIDQADIIIVGVSRTSKSPTSIYLAYRGYRVVNIPLVCSVQLPVDPATIADKLVVGLTIDADRLIQIRRNRLISMKHQENCNYVSYEQVVEEINEMKKICAKNRWPTIDVTQKSVEEIAATIIQFFNRKNNRTGDALY.

Position 152–159 (152–159 (GVSRTSKS)) interacts with ADP.

This sequence belongs to the pyruvate, phosphate/water dikinase regulatory protein family. PDRP subfamily.

It carries out the reaction N(tele)-phospho-L-histidyl/L-threonyl-[pyruvate, phosphate dikinase] + ADP = N(tele)-phospho-L-histidyl/O-phospho-L-threonyl-[pyruvate, phosphate dikinase] + AMP + H(+). The catalysed reaction is N(tele)-phospho-L-histidyl/O-phospho-L-threonyl-[pyruvate, phosphate dikinase] + phosphate + H(+) = N(tele)-phospho-L-histidyl/L-threonyl-[pyruvate, phosphate dikinase] + diphosphate. Its function is as follows. Bifunctional serine/threonine kinase and phosphorylase involved in the regulation of the pyruvate, phosphate dikinase (PPDK) by catalyzing its phosphorylation/dephosphorylation. This is Putative pyruvate, phosphate dikinase regulatory protein from Anaplasma marginale (strain Florida).